The chain runs to 388 residues: 2-epi-5-epi-valiolone synthase (388 aa).

NAD(+) is bound by residues 92-95 (ERNK), 124-128 (GIVAD), 148-149 (TT), Lys-161, Lys-170, and 188-191 (LLAT). Zn(2+) contacts are provided by Glu-203, His-267, and His-283.

Belongs to the sugar phosphate cyclases superfamily. EEVS-like family. NAD(+) serves as cofactor. Co(2+) is required as a cofactor. The cofactor is Zn(2+).

The enzyme catalyses D-sedoheptulose 7-phosphate = 2-epi-5-epi-valiolone + phosphate. Catalyzes the cyclization of D-sedoheptulose 7-phosphate to 2-epi-5-epi-valiolone. Probably involved in acarbose biosynthesis. In Streptomyces glaucescens, this protein is 2-epi-5-epi-valiolone synthase.